We begin with the raw amino-acid sequence, 217 residues long: Small ribosomal subunit protein uS3c (217 aa).

One can recognise a KH type-2 domain in the interval 43–117; the sequence is IKNYVQKNKR…KLNIAITRIA (75 aa).

The protein belongs to the universal ribosomal protein uS3 family. In terms of assembly, part of the 30S ribosomal subunit.

The protein resides in the plastid. Its subcellular location is the chloroplast. The chain is Small ribosomal subunit protein uS3c (rps3) from Platanus occidentalis (Sycamore).